The sequence spans 765 residues: 5-methyltetrahydropteroyltriglutamate--homocysteine methyltransferase (765 aa).

Residues 18 to 21 (REWK) and lysine 114 contribute to the 5-methyltetrahydropteroyltri-L-glutamate site. Residues 437–439 (IGS) and glutamate 490 contribute to the L-homocysteine site. L-methionine contacts are provided by residues 437 to 439 (IGS) and glutamate 490. Position 567 (tryptophan 567) interacts with 5-methyltetrahydropteroyltri-L-glutamate. Aspartate 605 is an L-homocysteine binding site. Aspartate 605 provides a ligand contact to L-methionine. Glutamate 611 contributes to the 5-methyltetrahydropteroyltri-L-glutamate binding site. Residues histidine 647, cysteine 649, and glutamate 671 each coordinate Zn(2+). Histidine 700 (proton donor) is an active-site residue. A Zn(2+)-binding site is contributed by cysteine 732.

Belongs to the vitamin-B12 independent methionine synthase family. Requires Zn(2+) as cofactor.

The catalysed reaction is 5-methyltetrahydropteroyltri-L-glutamate + L-homocysteine = tetrahydropteroyltri-L-glutamate + L-methionine. It functions in the pathway amino-acid biosynthesis; L-methionine biosynthesis via de novo pathway; L-methionine from L-homocysteine (MetE route): step 1/1. Its function is as follows. Catalyzes the transfer of a methyl group from 5-methyltetrahydrofolate to homocysteine resulting in methionine formation. This is 5-methyltetrahydropteroyltriglutamate--homocysteine methyltransferase from Listeria welshimeri serovar 6b (strain ATCC 35897 / DSM 20650 / CCUG 15529 / CIP 8149 / NCTC 11857 / SLCC 5334 / V8).